A 313-amino-acid polypeptide reads, in one-letter code: MEEENATLLTEFVLTGFLYQPQWKIPLFLAFLVIYLITIMGNLGLIAVIWKDPHLHIPMYLLLGNLAFVDAWISSTVTPKMLNNFLAKSKMISLSECKIQFFSIAIGVTTECFLLATMAYDRYVAICKPLLYPAIMTNGLCIRLLILSYIAGILHALIHEGFLFRLTFCNSNIVHHIYCDTIPLSKISCTDSSINFLMVFIFSGSIQVFSIVTILISYTFVLFTVLEKKSDKGVRKAFSTCGAHLFSVCLYYGPLLLMYVGPASPQADGQNMVEPLFYTVIIPLLNPIIYSLRNKQVIVSFIKMLKRNVKVSY.

The Extracellular segment spans residues 1–28; sequence MEEENATLLTEFVLTGFLYQPQWKIPLF. Asparagine 5 carries an N-linked (GlcNAc...) asparagine glycan. The chain crosses the membrane as a helical span at residues 29 to 49; it reads LAFLVIYLITIMGNLGLIAVI. Over 50-56 the chain is Cytoplasmic; sequence WKDPHLH. Residues 57-77 form a helical membrane-spanning segment; it reads IPMYLLLGNLAFVDAWISSTV. Over 78-98 the chain is Extracellular; it reads TPKMLNNFLAKSKMISLSECK. Cysteine 97 and cysteine 179 are oxidised to a cystine. A helical membrane pass occupies residues 99-119; the sequence is IQFFSIAIGVTTECFLLATMA. Residues 120–143 are Cytoplasmic-facing; it reads YDRYVAICKPLLYPAIMTNGLCIR. A helical transmembrane segment spans residues 144-164; that stretch reads LLILSYIAGILHALIHEGFLF. Topologically, residues 165–195 are extracellular; the sequence is RLTFCNSNIVHHIYCDTIPLSKISCTDSSIN. Residues 196–216 form a helical membrane-spanning segment; it reads FLMVFIFSGSIQVFSIVTILI. The Cytoplasmic portion of the chain corresponds to 217 to 240; the sequence is SYTFVLFTVLEKKSDKGVRKAFST. The chain crosses the membrane as a helical span at residues 241 to 261; the sequence is CGAHLFSVCLYYGPLLLMYVG. The Extracellular segment spans residues 262 to 271; it reads PASPQADGQN. Residues 272 to 292 form a helical membrane-spanning segment; sequence MVEPLFYTVIIPLLNPIIYSL. Residues 293 to 313 are Cytoplasmic-facing; sequence RNKQVIVSFIKMLKRNVKVSY.

This sequence belongs to the G-protein coupled receptor 1 family.

The protein localises to the cell membrane. Its function is as follows. Odorant receptor. The sequence is that of Olfactory receptor 5H15 (OR5H15) from Homo sapiens (Human).